Reading from the N-terminus, the 671-residue chain is DNA ligase (671 aa).

NAD(+) is bound by residues 32–36 (DAEYD), 81–82 (SL), and Glu-113. The active-site N6-AMP-lysine intermediate is Lys-115. NAD(+) contacts are provided by Arg-136, Glu-173, Lys-290, and Lys-314. Zn(2+) contacts are provided by Cys-408, Cys-411, Cys-426, and Cys-432. The region spanning 593–671 (EIDSPFAGKT…EAEMLRLLGS (79 aa)) is the BRCT domain.

This sequence belongs to the NAD-dependent DNA ligase family. LigA subfamily. Mg(2+) is required as a cofactor. Requires Mn(2+) as cofactor.

It catalyses the reaction NAD(+) + (deoxyribonucleotide)n-3'-hydroxyl + 5'-phospho-(deoxyribonucleotide)m = (deoxyribonucleotide)n+m + AMP + beta-nicotinamide D-nucleotide.. Functionally, DNA ligase that catalyzes the formation of phosphodiester linkages between 5'-phosphoryl and 3'-hydroxyl groups in double-stranded DNA using NAD as a coenzyme and as the energy source for the reaction. It is essential for DNA replication and repair of damaged DNA. This is DNA ligase from Escherichia coli O157:H7.